Here is a 934-residue protein sequence, read N- to C-terminus: Protocadherin gamma-C3 (934 aa).

Residues 1–31 form the signal peptide; sequence MVPEAWRSGLVSTGRVVGVLLLLGALNKAST. 6 consecutive Cadherin domains span residues 32 to 135, 136 to 244, 245 to 352, 353 to 457, 458 to 567, and 572 to 685; these read VIHY…NPAF, PTQE…APVF, NQSL…APEI, TVTS…PPQS, SQSS…APQV, and PGGS…APRE. At 32–693 the chain is on the extracellular side; sequence VIHYEIPEER…REQNKNLTFY (662 aa). N-linked (GlcNAc...) asparagine glycans are attached at residues asparagine 245, asparagine 424, asparagine 478, asparagine 550, asparagine 615, and asparagine 689. The chain crosses the membrane as a helical span at residues 694–714; sequence LLLSLILVSVGFVVTVFGVII. Residues 715–934 lie on the Cytoplasmic side of the membrane; sequence FKVYKWKQSR…KKKSGKKEKK (220 aa). 2 disordered regions span residues 804–843 and 904–934; these read ESAP…WPNN and ATLT…KEKK. The span at 812–843 shows a compositional bias: polar residues; that stretch reads APPNTDWRFSQAQRPGTSGSQNGDDTGTWPNN. A compositionally biased stretch (basic residues) spans 924–934; sequence NKKKSGKKEKK.

The protein resides in the cell membrane. Functionally, potential calcium-dependent cell-adhesion protein. May be involved in the establishment and maintenance of specific neuronal connections in the brain. This is Protocadherin gamma-C3 (PCDHGC3) from Pan troglodytes (Chimpanzee).